Reading from the N-terminus, the 370-residue chain is Gibberellin 3-beta-dioxygenase 2-1 (370 aa).

One can recognise a Fe2OG dioxygenase domain in the interval 205–306; the sequence is MTATMHLNWY…RISLGYFLGP (102 aa). Fe cation contacts are provided by His-229, Asp-231, and His-287. Arg-297 is a catalytic residue.

This sequence belongs to the iron/ascorbate-dependent oxidoreductase family. GA3OX subfamily. Requires L-ascorbate as cofactor. The cofactor is Fe cation. As to expression, expressed in internodes, nodes and the ear of the elongating stem.

It catalyses the reaction gibberellin A20 + 2-oxoglutarate + O2 = gibberellin A1 + succinate + CO2. Functionally, converts the inactive gibberellin precursors GA9 and GA20 in the bioactives gibberellins GA4 and GA1. Also accepts GA15, GA44, the 2,3-unsaturated GA5 and 2,3-dihydroGA9 as substrate. No activity with GA12, GA53, GA24, GA19 and GA25. Also possesses 2-beta-hydroxylase, 2,3-desaturase, 2,3-epoxidase and 13-hydroxylase activities. This is Gibberellin 3-beta-dioxygenase 2-1 (GA3ox2-1) from Triticum aestivum (Wheat).